The primary structure comprises 179 residues: MSILPIVIAPDERLITRASEVTDINDKIKELVNDMFETMYDAEGLGLAAVQVGVLKRIFVMDIQLETIENEPAGYGSTGKFYMINPEITELSDEQVILKEGCLSIPEQSHEIKRPKYLTVKYKDLDNEEQTLKASGWLARCIQHELDHLNGILYIRHLSKLKYDMAMKKAQKVKKHYEQ.

2 residues coordinate Fe cation: C102 and H144. Residue E145 is part of the active site. H148 contacts Fe cation.

It belongs to the polypeptide deformylase family. Fe(2+) serves as cofactor.

The catalysed reaction is N-terminal N-formyl-L-methionyl-[peptide] + H2O = N-terminal L-methionyl-[peptide] + formate. In terms of biological role, removes the formyl group from the N-terminal Met of newly synthesized proteins. Requires at least a dipeptide for an efficient rate of reaction. N-terminal L-methionine is a prerequisite for activity but the enzyme has broad specificity at other positions. This is Peptide deformylase from Wolbachia pipientis wMel.